A 673-amino-acid polypeptide reads, in one-letter code: uncharacterized protein (673 aa).

Over 1-208 the chain is Cytoplasmic; the sequence is MSTHSNDYFS…STGQLELPPD (208 aa). 3 positions are modified to phosphoserine: Ser-57, Ser-112, and Ser-172. Residues 209–229 form a helical membrane-spanning segment; sequence GGYGWVVTFCVFLTMFSTWGC. N-linked (GlcNAc...) asparagine glycosylation occurs at Asn-230. Residues 230-255 lie on the Lumenal side of the membrane; the sequence is NASFGVDLAYYLNHDTYPGASKYDYA. The chain crosses the membrane as a helical span at residues 256–276; that stretch reads LIAGLTVFLGQLLSPLVMALM. A topological domain (cytoplasmic) is located at residue Arg-277. The helical transmembrane segment at 278 to 298 threads the bilayer; the sequence is IIGLRTTMLFGDAVMLAAYLL. Residues 299 to 315 are Lumenal-facing; it reads ASFTTKLWQLYVTQGFM. The chain crosses the membrane as a helical span at residues 316–336; sequence VGCSISLIFVPATTVLPGWFL. Over 337–339 the chain is Cytoplasmic; that stretch reads KKR. The chain crosses the membrane as a helical span at residues 340–360; the sequence is AVAMGVSLLGTGAGGVVYGLA. Residues 361 to 372 lie on the Lumenal side of the membrane; it reads TNKMLSDFGNTR. A helical membrane pass occupies residues 373–393; sequence WCLRIIGISCSISVLVAIALL. The Cytoplasmic portion of the chain corresponds to 394 to 426; it reads KERNPTPAIGLKSPRAMFEQLKAMFSLKVITKP. A helical transmembrane segment spans residues 427 to 447; it reads FVVLIALWFMFALFAYNMMVF. The Lumenal portion of the chain corresponds to 448-504; sequence TLSSYAISKGLSSHDASTLTAILNGSQSIGRPLMGLAGDKFGRANVTIVLTTLLTIY. N-linked (GlcNAc...) asparagine glycosylation is found at Asn-471 and Asn-492. The helical transmembrane segment at 505–525 threads the bilayer; sequence MFAFWIPAHTFVQLIFFSILV. At 526-549 the chain is on the cytoplasmic side; the sequence is GSCVGVANVMNTVLIADMVKPEEF. Residues 550–570 traverse the membrane as a helical segment; it reads LPAWAFVNYCGAPFLLVCEVI. The Lumenal segment spans residues 571–584; sequence AQALTVEKDKSNPY. The helical transmembrane segment at 585–605 threads the bilayer; the sequence is LHAQIFCGCCFIAALILISIL. Over 606-673 the chain is Cytoplasmic; that stretch reads REYSIRMKLT…FLRMVYPMKV (68 aa). The residue at position 637 (Ser-637) is a Phosphoserine.

It belongs to the major facilitator superfamily. Monocarboxylate porter (TC 2.A.1.13) family.

Its subcellular location is the endoplasmic reticulum membrane. This is an uncharacterized protein from Saccharomyces cerevisiae (strain ATCC 204508 / S288c) (Baker's yeast).